The primary structure comprises 468 residues: ATP synthase subunit beta (468 aa).

ATP is bound at residue 155–162 (GGAGVGKT).

The protein belongs to the ATPase alpha/beta chains family. F-type ATPases have 2 components, CF(1) - the catalytic core - and CF(0) - the membrane proton channel. CF(1) has five subunits: alpha(3), beta(3), gamma(1), delta(1), epsilon(1). CF(0) has three main subunits: a(1), b(2) and c(9-12). The alpha and beta chains form an alternating ring which encloses part of the gamma chain. CF(1) is attached to CF(0) by a central stalk formed by the gamma and epsilon chains, while a peripheral stalk is formed by the delta and b chains.

Its subcellular location is the cell membrane. The enzyme catalyses ATP + H2O + 4 H(+)(in) = ADP + phosphate + 5 H(+)(out). Its function is as follows. Produces ATP from ADP in the presence of a proton gradient across the membrane. The catalytic sites are hosted primarily by the beta subunits. In Streptococcus pyogenes serotype M1, this protein is ATP synthase subunit beta.